The following is a 119-amino-acid chain: MSDSDAMTDPNAVSYSNAIVVLCTAPDEASAQNLAAQVLGEKLAACVTLLPGATSLYYWEGKLEQEYEVQLLFKSNTDHQQALLTYIKQHHPYQTPELLVLPVRDGDKDYLSWLNASLL.

Cu cation-binding residues include C23, H90, and H91.

The protein belongs to the CutA family. In terms of assembly, homotrimer. It depends on Cu cation as a cofactor.

Its subcellular location is the cytoplasm. In terms of biological role, involved in resistance toward heavy metals. This Yersinia pseudotuberculosis serotype O:1b (strain IP 31758) protein is Divalent-cation tolerance protein CutA.